A 164-amino-acid chain; its full sequence is MPEQLNTRVEDCFLQAESFFKRSFKRPQVSLKLRGQKAGVAHLHENLLRFNPQLYRENSQHFLKQTVAHEVAHLIAHQLFGERIQPHGEEWQLIMRGVYELPPDRCHTYEVKRRQVTRYIYRCPCADSDFPFSSQRHGMVAQGRRYLCRRCRQTLVFTGETRVE.

The SprT-like domain maps to 12–157 (CFLQAESFFK…CRRCRQTLVF (146 aa)). His69 is a binding site for Zn(2+). Glu70 is a catalytic residue. His73 lines the Zn(2+) pocket.

Belongs to the SprT family. It depends on Zn(2+) as a cofactor.

The protein resides in the cytoplasm. This is Protein SprT from Pseudomonas fluorescens (strain SBW25).